Here is a 184-residue protein sequence, read N- to C-terminus: ATP synthase subunit b, chloroplastic (184 aa).

The helical transmembrane segment at 31–53 (LINLAVVIGVLVYFGKGVLTTIL) threads the bilayer.

This sequence belongs to the ATPase B chain family. In terms of assembly, F-type ATPases have 2 components, F(1) - the catalytic core - and F(0) - the membrane proton channel. F(1) has five subunits: alpha(3), beta(3), gamma(1), delta(1), epsilon(1). F(0) has four main subunits: a(1), b(1), b'(1) and c(10-14). The alpha and beta chains form an alternating ring which encloses part of the gamma chain. F(1) is attached to F(0) by a central stalk formed by the gamma and epsilon chains, while a peripheral stalk is formed by the delta, b and b' chains.

The protein resides in the plastid. It is found in the chloroplast thylakoid membrane. Its function is as follows. F(1)F(0) ATP synthase produces ATP from ADP in the presence of a proton or sodium gradient. F-type ATPases consist of two structural domains, F(1) containing the extramembraneous catalytic core and F(0) containing the membrane proton channel, linked together by a central stalk and a peripheral stalk. During catalysis, ATP synthesis in the catalytic domain of F(1) is coupled via a rotary mechanism of the central stalk subunits to proton translocation. Component of the F(0) channel, it forms part of the peripheral stalk, linking F(1) to F(0). The protein is ATP synthase subunit b, chloroplastic of Staurastrum punctulatum (Green alga).